A 104-amino-acid chain; its full sequence is Large ribosomal subunit protein bL21 (104 aa).

Belongs to the bacterial ribosomal protein bL21 family. In terms of assembly, part of the 50S ribosomal subunit. Contacts protein L20.

Its function is as follows. This protein binds to 23S rRNA in the presence of protein L20. This is Large ribosomal subunit protein bL21 from Pseudomonas entomophila (strain L48).